Here is a 147-residue protein sequence, read N- to C-terminus: HTH-type transcriptional regulator HmrR (147 aa).

One can recognise an HTH merR-type domain in the interval 1 to 69; sequence MNIGEASKVS…VEQIKELLAL (69 aa). Positions 4-23 form a DNA-binding region, H-T-H motif; that stretch reads GEASKVSGVSSKMIRYYEQI.

In terms of assembly, homodimer.

It is found in the cytoplasm. Regulates the transcription of actP. It detects cytoplasmic copper stress and activates transcription in response to increasing copper concentrations. In the absence of copper, it negatively regulates the transcription of actP. This chain is HTH-type transcriptional regulator HmrR (hmrR), found in Sinorhizobium medicae (strain WSM419) (Ensifer medicae).